We begin with the raw amino-acid sequence, 578 residues long: Putative fatty-acid--CoA ligase fadD21 (578 aa).

This sequence belongs to the ATP-dependent AMP-binding enzyme family.

The sequence is that of Putative fatty-acid--CoA ligase fadD21 (fadD21) from Mycobacterium bovis (strain ATCC BAA-935 / AF2122/97).